Reading from the N-terminus, the 184-residue chain is Adenine phosphoribosyltransferase (184 aa).

This sequence belongs to the purine/pyrimidine phosphoribosyltransferase family. In terms of assembly, homodimer.

The protein localises to the cytoplasm. The enzyme catalyses AMP + diphosphate = 5-phospho-alpha-D-ribose 1-diphosphate + adenine. It functions in the pathway purine metabolism; AMP biosynthesis via salvage pathway; AMP from adenine: step 1/1. Catalyzes a salvage reaction resulting in the formation of AMP, that is energically less costly than de novo synthesis. The protein is Adenine phosphoribosyltransferase of Myxococcus xanthus (strain DK1622).